We begin with the raw amino-acid sequence, 446 residues long: Glucose-6-phosphate isomerase (446 aa).

Residue glutamate 288 is the Proton donor of the active site. Active-site residues include histidine 309 and lysine 423.

This sequence belongs to the GPI family.

Its subcellular location is the cytoplasm. The enzyme catalyses alpha-D-glucose 6-phosphate = beta-D-fructose 6-phosphate. The protein operates within carbohydrate biosynthesis; gluconeogenesis. Its pathway is carbohydrate degradation; glycolysis; D-glyceraldehyde 3-phosphate and glycerone phosphate from D-glucose: step 2/4. Functionally, catalyzes the reversible isomerization of glucose-6-phosphate to fructose-6-phosphate. The chain is Glucose-6-phosphate isomerase from Lactobacillus delbrueckii subsp. bulgaricus (strain ATCC 11842 / DSM 20081 / BCRC 10696 / JCM 1002 / NBRC 13953 / NCIMB 11778 / NCTC 12712 / WDCM 00102 / Lb 14).